The primary structure comprises 150 residues: uncharacterized protein (150 aa).

Low complexity predominate over residues 1 to 19 (MNDDSSSSSSGDSSDGSSG). Disordered stretches follow at residues 1–21 (MNDDSSSSSSGDSSDGSSGTT) and 85–131 (EPEA…AYPE). A compositionally biased stretch (pro residues) spans 106-115 (RPPPTEPPTV).

This is an uncharacterized protein from Schizosaccharomyces pombe (strain 972 / ATCC 24843) (Fission yeast).